A 190-amino-acid polypeptide reads, in one-letter code: Lipid A acyltransferase PagP (190 aa).

Residues 1 to 18 form the signal peptide; it reads MKRLISCLTIICALNASA. Residues histidine 60, aspartate 103, and serine 104 contribute to the active site.

It belongs to the lipid A palmitoyltransferase family. Homodimer.

It is found in the cell outer membrane. It carries out the reaction a lipid A + a 1,2-diacyl-sn-glycero-3-phosphocholine = a hepta-acyl lipid A + a 2-acyl-sn-glycero-3-phosphocholine. The enzyme catalyses a lipid IVA + a 1,2-diacyl-sn-glycero-3-phosphocholine = a lipid IVB + a 2-acyl-sn-glycero-3-phosphocholine. The catalysed reaction is a lipid IIA + a 1,2-diacyl-sn-glycero-3-phosphocholine = a lipid IIB + a 2-acyl-sn-glycero-3-phosphocholine. Functionally, transfers a fatty acid residue from the sn-1 position of a phospholipid to the N-linked hydroxyfatty acid chain on the proximal unit of lipid A or its precursors. The chain is Lipid A acyltransferase PagP from Legionella pneumophila serogroup 1 (strain 2300/99 Alcoy).